Reading from the N-terminus, the 512-residue chain is Bifunctional purine biosynthesis protein PurH (512 aa).

Positions 1 to 150 constitute an MGS-like domain; it reads MIGEERVVRA…KNFPAVLVLV (150 aa).

It belongs to the PurH family.

The enzyme catalyses (6R)-10-formyltetrahydrofolate + 5-amino-1-(5-phospho-beta-D-ribosyl)imidazole-4-carboxamide = 5-formamido-1-(5-phospho-D-ribosyl)imidazole-4-carboxamide + (6S)-5,6,7,8-tetrahydrofolate. It catalyses the reaction IMP + H2O = 5-formamido-1-(5-phospho-D-ribosyl)imidazole-4-carboxamide. It functions in the pathway purine metabolism; IMP biosynthesis via de novo pathway; 5-formamido-1-(5-phospho-D-ribosyl)imidazole-4-carboxamide from 5-amino-1-(5-phospho-D-ribosyl)imidazole-4-carboxamide (10-formyl THF route): step 1/1. The protein operates within purine metabolism; IMP biosynthesis via de novo pathway; IMP from 5-formamido-1-(5-phospho-D-ribosyl)imidazole-4-carboxamide: step 1/1. This Chloroflexus aurantiacus (strain ATCC 29366 / DSM 635 / J-10-fl) protein is Bifunctional purine biosynthesis protein PurH.